The following is a 439-amino-acid chain: Proline--tRNA ligase (439 aa).

This sequence belongs to the class-II aminoacyl-tRNA synthetase family. ProS type 2 subfamily. Homodimer.

It is found in the cytoplasm. The catalysed reaction is tRNA(Pro) + L-proline + ATP = L-prolyl-tRNA(Pro) + AMP + diphosphate. In terms of biological role, catalyzes the attachment of proline to tRNA(Pro) in a two-step reaction: proline is first activated by ATP to form Pro-AMP and then transferred to the acceptor end of tRNA(Pro). This Bradyrhizobium diazoefficiens (strain JCM 10833 / BCRC 13528 / IAM 13628 / NBRC 14792 / USDA 110) protein is Proline--tRNA ligase.